The primary structure comprises 252 residues: Ribosome maturation factor RimP (252 aa).

The segment at 188 to 252 is disordered; it reads QGAAPGTEGG…PAAGPGAQDE (65 aa). Positions 208–224 are enriched in basic residues; the sequence is ARRPHQPKPKKAKKKGP.

The protein belongs to the RimP family.

It localises to the cytoplasm. In terms of biological role, required for maturation of 30S ribosomal subunits. The chain is Ribosome maturation factor RimP from Rhodospirillum centenum (strain ATCC 51521 / SW).